The sequence spans 138 residues: Aspartate 1-decarboxylase (138 aa).

The active-site Schiff-base intermediate with substrate; via pyruvic acid is the Ser25. At Ser25 the chain carries Pyruvic acid (Ser). A substrate-binding site is contributed by Thr57. The Proton donor role is filled by Tyr58. 73–75 (GAA) is a substrate binding site. Positions 116 to 138 (ELGGDPAQVPDGSGLKNPRHPEA) are disordered.

It belongs to the PanD family. As to quaternary structure, heterooctamer of four alpha and four beta subunits. Requires pyruvate as cofactor. Is synthesized initially as an inactive proenzyme, which is activated by self-cleavage at a specific serine bond to produce a beta-subunit with a hydroxyl group at its C-terminus and an alpha-subunit with a pyruvoyl group at its N-terminus.

It localises to the cytoplasm. It catalyses the reaction L-aspartate + H(+) = beta-alanine + CO2. It functions in the pathway cofactor biosynthesis; (R)-pantothenate biosynthesis; beta-alanine from L-aspartate: step 1/1. Functionally, catalyzes the pyruvoyl-dependent decarboxylation of aspartate to produce beta-alanine. This chain is Aspartate 1-decarboxylase, found in Corynebacterium jeikeium (strain K411).